We begin with the raw amino-acid sequence, 65 residues long: STGKRNAGKLTVTDDVEADRDTDPDDKDPSVHNSWRTVDCGGVPCEFGCCRIIDGKEKCREIDCD.

The segment at 1–33 is disordered; the sequence is STGKRNAGKLTVTDDVEADRDTDPDDKDPSVHN. A propeptide spanning residues 1–36 is cleaved from the precursor; the sequence is STGKRNAGKLTVTDDVEADRDTDPDDKDPSVHNSWR. Acidic residues predominate over residues 14–26; it reads DDVEADRDTDPDD. Disulfide bonds link Cys-40-Cys-50, Cys-45-Cys-59, and Cys-49-Cys-64.

In terms of processing, is not hydroxylated. In terms of tissue distribution, expressed by the venom duct.

The protein resides in the secreted. Its function is as follows. Probable toxin that inhibits ion channels. The protein is Conotoxin Am6.4 of Conus amadis (Amadis cone).